Here is a 555-residue protein sequence, read N- to C-terminus: GMP synthase [glutamine-hydrolyzing] (555 aa).

The region spanning 8–234 (KILVLNFGSQ…AYNICKCKKQ (227 aa)) is the Glutamine amidotransferase type-1 domain. Cysteine 89 acts as the Nucleophile; for GATase activity in catalysis. Residues glutamine 93, asparagine 169, aspartate 172, and histidine 208 each coordinate L-glutamine. Active-site for GATase activity residues include histidine 208 and glutamate 210. The 196-residue stretch at 235–430 (FDPIRYHELE…LNLPEEITNR (196 aa)) folds into the GMPS ATP-PPase domain. 262 to 268 (SGGIDST) is an ATP binding site. XMP is bound by residues arginine 336, glutamine 476, lysine 547, isoleucine 552, and glutamate 553.

In terms of assembly, homodimer (via the GMPS ATP-PPase domain). Requires Mg(2+) as cofactor.

It catalyses the reaction XMP + L-glutamine + ATP + H2O = GMP + L-glutamate + AMP + diphosphate + 2 H(+). Its pathway is purine metabolism; GMP biosynthesis; GMP from XMP (L-Gln route): step 1/1. With respect to regulation, the GATase domain is allosterically activated by the binding of substrates, ATP and XMP, to the ATPPase domain, thus ensuring that glutamine hydrolysis occurs only when the ATPPase domain is primed to receive ammonia. Inhibited by Na(+). Inhibited by the reaction product GMP. In terms of biological role, catalyzes the conversion of xanthine monophosphate (XMP) to GMP in the presence of glutamine and ATP through an adenyl-XMP intermediate, which is the final step of de novo synthesis of GMP. The conversion of XMP to GMP involves the coordinated action of the glutamine amidotransferase (GATase) domain that catalyzes the hydrolysis of the amide side chain of glutamine producing ammonia and the ATP pyrophosphatase (ATPPase) domain that catalyzes the synthesis of adenyl-XMP intermediate from ATP. The ammonia produced by the GATase domain is tunnelled to the ATP-PPase domain where it attacks the adenyl-XMP intermediate generating GMP. The protein is GMP synthase [glutamine-hydrolyzing] of Plasmodium falciparum (isolate 3D7).